The primary structure comprises 154 residues: uncharacterized protein (154 aa).

An N-terminal signal peptide occupies residues 1-19; it reads MWSLKSTLCIALLVTYSVA. ShKT domains are found at residues 67–102 and 113–150; these read CADD…CGFC and CVDS…CKLC. 6 disulfides stabilise this stretch: cysteine 67/cysteine 102, cysteine 75/cysteine 95, cysteine 82/cysteine 99, cysteine 113/cysteine 150, cysteine 120/cysteine 143, and cysteine 129/cysteine 147.

This is an uncharacterized protein from Caenorhabditis elegans.